A 745-amino-acid polypeptide reads, in one-letter code: Aminopeptidase NAALADL1 (745 aa).

Residues 1–6 (MHWAKI) are Cytoplasmic-facing. The chain crosses the membrane as a helical; Signal-anchor for type II membrane protein span at residues 7–28 (LGVGIGAAALLGLGIILGHFAI). Over 29–745 (PKATEPLASS…AATLQPVTDL (717 aa)) the chain is Extracellular. N-linked (GlcNAc...) asparagine glycans are attached at residues N128, N141, and N235. Ca(2+)-binding residues include T263 and L266. Residues N279, N304, and N350 are each glycosylated (N-linked (GlcNAc...) asparagine). C301 and C318 are joined by a disulfide. Zn(2+) contacts are provided by H373 and D383. Residue E421 is the Proton donor/acceptor of the active site. A Zn(2+)-binding site is contributed by E422. 2 residues coordinate Ca(2+): E430 and E433. Residue D450 participates in Zn(2+) binding. 2 N-linked (GlcNAc...) asparagine glycosylation sites follow: N456 and N497. A Zn(2+)-binding site is contributed by H550. N-linked (GlcNAc...) asparagine glycans are attached at residues N593 and N620.

The protein belongs to the peptidase M28 family. M28B subfamily. As to quaternary structure, homodimer. Zn(2+) serves as cofactor. N-glycosylated. As to expression, detected on apical villi on the brush border membrane of ileum enterocytes (at protein level). Mainly expressed in the distal small intestine.

It localises to the apical cell membrane. Aminopeptidase with broad substrate specificity. Has lower activity with substrates that have Asp or Glu in the P2' position, or Pro in the P3' position. Lacks activity with substrates that have both Pro in the P3' position and Asp or Glu in the P2' position. Lacks carboxypeptidase activity. Lacks dipeptidyl-peptidase IV type activity. The protein is Aminopeptidase NAALADL1 (Naaladl1) of Rattus norvegicus (Rat).